Consider the following 887-residue polypeptide: Alanine--tRNA ligase (887 aa).

Zn(2+)-binding residues include His-564, His-568, Cys-676, and His-680.

This sequence belongs to the class-II aminoacyl-tRNA synthetase family. It depends on Zn(2+) as a cofactor.

Its subcellular location is the cytoplasm. It catalyses the reaction tRNA(Ala) + L-alanine + ATP = L-alanyl-tRNA(Ala) + AMP + diphosphate. Functionally, catalyzes the attachment of alanine to tRNA(Ala) in a two-step reaction: alanine is first activated by ATP to form Ala-AMP and then transferred to the acceptor end of tRNA(Ala). Also edits incorrectly charged Ser-tRNA(Ala) and Gly-tRNA(Ala) via its editing domain. The chain is Alanine--tRNA ligase from Agrobacterium fabrum (strain C58 / ATCC 33970) (Agrobacterium tumefaciens (strain C58)).